The sequence spans 165 residues: Small ribosomal subunit protein uS5 (165 aa).

In terms of domain architecture, S5 DRBM spans 10–73 (LVEKLVAVDR…EAARRNMITV (64 aa)).

Belongs to the universal ribosomal protein uS5 family. Part of the 30S ribosomal subunit. Contacts proteins S4 and S8.

In terms of biological role, with S4 and S12 plays an important role in translational accuracy. Located at the back of the 30S subunit body where it stabilizes the conformation of the head with respect to the body. This Acinetobacter baylyi (strain ATCC 33305 / BD413 / ADP1) protein is Small ribosomal subunit protein uS5.